The sequence spans 421 residues: RNase J-like protein (421 aa).

Zn(2+)-binding residues include histidine 55, histidine 57, aspartate 59, histidine 60, histidine 132, aspartate 153, and histidine 389.

Belongs to the metallo-beta-lactamase superfamily. RNA-metabolizing metallo-beta-lactamase-like family. Forms homodimers on heating to 60 degrees Celsius which may be the active form. It depends on Zn(2+) as a cofactor.

With respect to regulation, inhibited by imidazole. Its function is as follows. A 5'-3' exoribonuclease with a strong reference for 5'-monophosphorylated RNA and no endoribonuclease activty. The chain is RNase J-like protein from Methanocaldococcus jannaschii (strain ATCC 43067 / DSM 2661 / JAL-1 / JCM 10045 / NBRC 100440) (Methanococcus jannaschii).